Reading from the N-terminus, the 277-residue chain is Large ribosomal subunit protein uL2 (277 aa).

The tract at residues G222 to K277 is disordered.

The protein belongs to the universal ribosomal protein uL2 family. As to quaternary structure, part of the 50S ribosomal subunit. Forms a bridge to the 30S subunit in the 70S ribosome.

Functionally, one of the primary rRNA binding proteins. Required for association of the 30S and 50S subunits to form the 70S ribosome, for tRNA binding and peptide bond formation. It has been suggested to have peptidyltransferase activity; this is somewhat controversial. Makes several contacts with the 16S rRNA in the 70S ribosome. The polypeptide is Large ribosomal subunit protein uL2 (Bartonella henselae (strain ATCC 49882 / DSM 28221 / CCUG 30454 / Houston 1) (Rochalimaea henselae)).